A 233-amino-acid chain; its full sequence is tRNA (guanine-N(7)-)-methyltransferase (233 aa).

The interval 1–23 (MSPQDRPSRTTEAFFGRRRGKPV) is disordered. Positions 64, 89, 116, and 138 each coordinate S-adenosyl-L-methionine. D138 is a catalytic residue. Substrate-binding positions include K142, D174, and 212 to 215 (TRYE).

This sequence belongs to the class I-like SAM-binding methyltransferase superfamily. TrmB family.

The catalysed reaction is guanosine(46) in tRNA + S-adenosyl-L-methionine = N(7)-methylguanosine(46) in tRNA + S-adenosyl-L-homocysteine. It participates in tRNA modification; N(7)-methylguanine-tRNA biosynthesis. In terms of biological role, catalyzes the formation of N(7)-methylguanine at position 46 (m7G46) in tRNA. In Mesorhizobium japonicum (strain LMG 29417 / CECT 9101 / MAFF 303099) (Mesorhizobium loti (strain MAFF 303099)), this protein is tRNA (guanine-N(7)-)-methyltransferase.